A 132-amino-acid polypeptide reads, in one-letter code: UPF0299 membrane protein Ent638_2744 (132 aa).

The next 4 membrane-spanning stretches (helical) occupy residues 8–28, 31–51, 63–83, and 93–113; these read VWQY…GIFI, LLPI…LLLA, GCFV…VGVM, and FGPI…VVSW.

It belongs to the UPF0299 family.

It is found in the cell inner membrane. The chain is UPF0299 membrane protein Ent638_2744 from Enterobacter sp. (strain 638).